The sequence spans 394 residues: 8-amino-7-oxononanoate synthase (394 aa).

R21 contacts substrate. 112–113 is a binding site for pyridoxal 5'-phosphate; the sequence is GY. H137 lines the substrate pocket. 3 residues coordinate pyridoxal 5'-phosphate: S183, H211, and T239. K242 is subject to N6-(pyridoxal phosphate)lysine. T358 provides a ligand contact to substrate.

This sequence belongs to the class-II pyridoxal-phosphate-dependent aminotransferase family. BioF subfamily. In terms of assembly, homodimer. Pyridoxal 5'-phosphate serves as cofactor.

It catalyses the reaction 6-carboxyhexanoyl-[ACP] + L-alanine + H(+) = (8S)-8-amino-7-oxononanoate + holo-[ACP] + CO2. Its pathway is cofactor biosynthesis; biotin biosynthesis. Functionally, catalyzes the decarboxylative condensation of pimeloyl-[acyl-carrier protein] and L-alanine to produce 8-amino-7-oxononanoate (AON), [acyl-carrier protein], and carbon dioxide. The chain is 8-amino-7-oxononanoate synthase from Paraburkholderia xenovorans (strain LB400).